Consider the following 257-residue polypeptide: Tryptophan synthase alpha chain (257 aa).

Residues glutamate 51 and aspartate 62 each act as proton acceptor in the active site.

This sequence belongs to the TrpA family. As to quaternary structure, tetramer of two alpha and two beta chains.

It catalyses the reaction (1S,2R)-1-C-(indol-3-yl)glycerol 3-phosphate + L-serine = D-glyceraldehyde 3-phosphate + L-tryptophan + H2O. Its pathway is amino-acid biosynthesis; L-tryptophan biosynthesis; L-tryptophan from chorismate: step 5/5. Its function is as follows. The alpha subunit is responsible for the aldol cleavage of indoleglycerol phosphate to indole and glyceraldehyde 3-phosphate. This Nitratidesulfovibrio vulgaris (strain DP4) (Desulfovibrio vulgaris) protein is Tryptophan synthase alpha chain.